The following is a 1377-amino-acid chain: ATP-dependent helicase/nuclease subunit A (1377 aa).

The UvrD-like helicase ATP-binding domain maps to 4–478 (TSWTPGQQKV…IDLSKNFRSR (475 aa)). 25–32 (AAAGSGKT) contacts ATP. Positions 526–867 (FLFSDTKTEL…RIMSIHKSKG (342 aa)) constitute a UvrD-like helicase C-terminal domain. The segment covering 1036-1065 (FEEESDEQSDEERSDEERSDGEQSDGEQSD) has biased composition (acidic residues). Positions 1036–1072 (FEEESDEQSDEERSDEERSDGEQSDGEQSDGEQPRKD) are disordered.

This sequence belongs to the helicase family. AddA subfamily. In terms of assembly, heterodimer of AddA and AddB/RexB. The cofactor is Mg(2+).

The enzyme catalyses Couples ATP hydrolysis with the unwinding of duplex DNA by translocating in the 3'-5' direction.. It carries out the reaction ATP + H2O = ADP + phosphate + H(+). The heterodimer acts as both an ATP-dependent DNA helicase and an ATP-dependent, dual-direction single-stranded exonuclease. Recognizes the chi site generating a DNA molecule suitable for the initiation of homologous recombination. The AddA nuclease domain is required for chi fragment generation; this subunit has the helicase and 3' -&gt; 5' nuclease activities. In Lachnoclostridium phytofermentans (strain ATCC 700394 / DSM 18823 / ISDg) (Clostridium phytofermentans), this protein is ATP-dependent helicase/nuclease subunit A.